A 373-amino-acid polypeptide reads, in one-letter code: Aminomethyltransferase (373 aa).

The protein belongs to the GcvT family. The glycine cleavage system is composed of four proteins: P, T, L and H.

It carries out the reaction N(6)-[(R)-S(8)-aminomethyldihydrolipoyl]-L-lysyl-[protein] + (6S)-5,6,7,8-tetrahydrofolate = N(6)-[(R)-dihydrolipoyl]-L-lysyl-[protein] + (6R)-5,10-methylene-5,6,7,8-tetrahydrofolate + NH4(+). Functionally, the glycine cleavage system catalyzes the degradation of glycine. This Prochlorococcus marinus (strain SARG / CCMP1375 / SS120) protein is Aminomethyltransferase.